Reading from the N-terminus, the 228-residue chain is Probable septum site-determining protein MinC (228 aa).

The protein belongs to the MinC family. In terms of assembly, interacts with MinD and FtsZ.

In terms of biological role, cell division inhibitor that blocks the formation of polar Z ring septums. Rapidly oscillates between the poles of the cell to destabilize FtsZ filaments that have formed before they mature into polar Z rings. Prevents FtsZ polymerization. In Bacillus anthracis (strain A0248), this protein is Probable septum site-determining protein MinC.